Consider the following 4011-residue polypeptide: Hybrid PKS-NRPS synthetase mycA (4011 aa).

The region spanning 12–451 (NEPIAIIGSA…GANAHVILEN (440 aa)) is the Ketosynthase family 3 (KS3) domain. Residues Cys185, His324, and His373 each act as for beta-ketoacyl synthase activity in the active site. An acyl transferase (AT) domain region spans residues 576–903 (VFTGQGAQWA…PYTGTLSRGS (328 aa)). Positions 977-1113 (NPLLGRRIPD…GRVIVTLAGT (137 aa)) are N-terminal hotdog fold. In terms of domain architecture, PKS/mFAS DH spans 977-1290 (NPLLGRRIPD…ITPLATRTGQ (314 aa)). The dehydratase (DH) domain stretch occupies residues 978-1287 (PLLGRRIPDG…GVRITPLATR (310 aa)). His1009 acts as the Proton acceptor; for dehydratase activity in catalysis. Positions 1135 to 1290 (TAEVREDEFY…ITPLATRTGQ (156 aa)) are C-terminal hotdog fold. Asp1195 acts as the Proton donor; for dehydratase activity in catalysis. Residues 1434 to 1626 (YYVEALGIRE…FSGIDTITPE (193 aa)) are methyltransferase (MT) domain. The interval 2138–2311 (TYVLFGLTSD…AASVLHLGAV (174 aa)) is ketoreductase (KR)domain. Residues 2429 to 2504 (DSFLQKLQIM…DLVAFAHEKL (76 aa)) form the Carrier 1 domain. Ser2464 carries the post-translational modification O-(pantetheine 4'-phosphoryl)serine. Positions 2519-2607 (AAAAAAAERS…PREQDVERTA (89 aa)) are disordered. The segment covering 2559-2578 (PASSSTGSDHPTSVTSSGHT) has biased composition (polar residues). The tract at residues 2604–2975 (ERTAPMSLGQ…KPDSTLGSAP (372 aa)) is condensation. Residues 3009–3414 (IIQRNPDTIA…GELEILGRID (406 aa)) form an adenylation region. The disordered stretch occupies residues 3525–3544 (AKEEEEEKRPNGSSAAPLTQ). The span at 3535-3544 (NGSSAAPLTQ) shows a compositional bias: polar residues. The Carrier 2 domain maps to 3541-3621 (PLTQQELQLR…AMAAAVHDAA (81 aa)). The residue at position 3581 (Ser3581) is an O-(pantetheine 4'-phosphoryl)serine. A reductase-like region spans residues 3671–3978 (VVILTGATGF…RTVPLGQWIE (308 aa)).

This sequence in the C-terminal section; belongs to the NRP synthetase family.

It carries out the reaction L-leucine + 8 malonyl-CoA + 4 S-adenosyl-L-methionine + ATP + 9 NADPH + 12 H(+) = (5S)-5-(2-methylpropyl)-3-[(2E,6R,8E,10E,12E)-6,8,10,12-tetramethyltetradeca-2,8,10,12-tetraenoyl]-2,5-dihydro-1H-pyrrol-2-one + AMP + 4 S-adenosyl-L-homocysteine + 8 CO2 + diphosphate + 9 NADP(+) + 8 CoA + 7 H2O. The protein operates within mycotoxin biosynthesis. In terms of biological role, hybrid PKS-NRPS synthetase; part of the gene cluster that mediates the biosynthesis of myceliothermophins, mycotoxins that contain a trans-fused decalin ring system connected to a conjugated 3-pyrrolin-2-one moiety and that have potential anti-tumor properties. The polyketide synthase module (PKS) of the PKS-NRPS mycA is responsible for the synthesis of the octaketide backbone. The downstream nonribosomal peptide synthetase (NRPS) module then amidates the carboxyl end of the octaketide with a leucine. A reductase-like domain (R) at the C-terminus catalyzes the reductive release of the polyketide-amino acid intermediate. Because mycA lacks a designated enoylreductase (ER) domain, the required activity is provided the enoyl reductase mycC. Following mycA-catalyzed construction and release of aminoacyl polyketide aldehyde, Knoevenagel condensation yields the expected ketone. This C18 keto acyclic precursor is the substrate of the Diels-Alderase mycB, that catalyzes the Diels-Alder cycloaddition to produce myceliothermophin E. A yet unknown oxygenase involved in the production of myceliothermophin A, via substitution with a hydroxyl group at the C21, has still to be identified. This chain is Hybrid PKS-NRPS synthetase mycA, found in Thermothelomyces thermophilus (strain ATCC 42464 / BCRC 31852 / DSM 1799) (Sporotrichum thermophile).